The sequence spans 149 residues: Large ribosomal subunit protein bL9 (149 aa).

Lys89 carries the N6-acetyllysine modification.

The protein belongs to the bacterial ribosomal protein bL9 family.

Functionally, binds to the 23S rRNA. The polypeptide is Large ribosomal subunit protein bL9 (Shigella dysenteriae serotype 1 (strain Sd197)).